Consider the following 343-residue polypeptide: Photosystem II protein D1 (343 aa).

3 consecutive transmembrane segments (helical) span residues 28-45 (YIGW…VSTV), 117-132 (HFLA…EYEY), and 141-155 (WIYL…AASA). Histidine 117 lines the chlorophyll a pocket. Tryptophan 125 lines the pheophytin a pocket. Aspartate 169 and glutamate 188 together coordinate [CaMn4O5] cluster. Residues 196-217 (FHILGVSAVFGGSLFSAMHGSL) form a helical membrane-spanning segment. Residue histidine 197 coordinates chlorophyll a. A quinone-binding positions include histidine 214 and 263 to 264 (SF). Histidine 214 is a Fe cation binding site. Histidine 271 contributes to the Fe cation binding site. The helical transmembrane segment at 273–287 (FLAAWPVIGIWCTAI) threads the bilayer. Histidine 331, glutamate 332, aspartate 341, and alanine 343 together coordinate [CaMn4O5] cluster.

Belongs to the reaction center PufL/M/PsbA/D family. In terms of assembly, PSII is composed of 1 copy each of membrane proteins PsbA, PsbB, PsbC, PsbD, PsbE, PsbF, PsbH, PsbI, PsbJ, PsbK, PsbL, PsbM, PsbT, PsbX, PsbY, PsbZ, Psb30/Ycf12, at least 3 peripheral proteins of the oxygen-evolving complex and a large number of cofactors. It forms dimeric complexes. The D1/D2 heterodimer binds P680, chlorophylls that are the primary electron donor of PSII, and subsequent electron acceptors. It shares a non-heme iron and each subunit binds pheophytin, quinone, additional chlorophylls, carotenoids and lipids. D1 provides most of the ligands for the Mn4-Ca-O5 cluster of the oxygen-evolving complex (OEC). There is also a Cl(-1) ion associated with D1 and D2, which is required for oxygen evolution. The PSII complex binds additional chlorophylls, carotenoids and specific lipids. is required as a cofactor. In terms of processing, tyr-160 forms a radical intermediate that is referred to as redox-active TyrZ, YZ or Y-Z.

It localises to the plastid. It is found in the chloroplast thylakoid membrane. The catalysed reaction is 2 a plastoquinone + 4 hnu + 2 H2O = 2 a plastoquinol + O2. Its function is as follows. Photosystem II (PSII) is a light-driven water:plastoquinone oxidoreductase that uses light energy to abstract electrons from H(2)O, generating O(2) and a proton gradient subsequently used for ATP formation. It consists of a core antenna complex that captures photons, and an electron transfer chain that converts photonic excitation into a charge separation. The D1/D2 (PsbA/PsbD) reaction center heterodimer binds P680, the primary electron donor of PSII as well as several subsequent electron acceptors. The chain is Photosystem II protein D1 from Prorocentrum micans (Red tide dinoflagellate).